We begin with the raw amino-acid sequence, 210 residues long: Potassium-transporting ATPase KdpC subunit (210 aa).

Residues 13-33 (LVTLVLLLVCGLAYPLILTGI) form a helical membrane-spanning segment.

The protein belongs to the KdpC family. As to quaternary structure, the system is composed of three essential subunits: KdpA, KdpB and KdpC.

It is found in the cell membrane. In terms of biological role, part of the high-affinity ATP-driven potassium transport (or Kdp) system, which catalyzes the hydrolysis of ATP coupled with the electrogenic transport of potassium into the cytoplasm. This subunit acts as a catalytic chaperone that increases the ATP-binding affinity of the ATP-hydrolyzing subunit KdpB by the formation of a transient KdpB/KdpC/ATP ternary complex. This chain is Potassium-transporting ATPase KdpC subunit, found in Clostridium kluyveri (strain ATCC 8527 / DSM 555 / NBRC 12016 / NCIMB 10680 / K1).